The sequence spans 355 residues: UDP-3-O-acylglucosamine N-acyltransferase (355 aa).

Residue histidine 258 is the Proton acceptor of the active site.

The protein belongs to the transferase hexapeptide repeat family. LpxD subfamily. In terms of assembly, homotrimer.

The enzyme catalyses a UDP-3-O-[(3R)-3-hydroxyacyl]-alpha-D-glucosamine + a (3R)-hydroxyacyl-[ACP] = a UDP-2-N,3-O-bis[(3R)-3-hydroxyacyl]-alpha-D-glucosamine + holo-[ACP] + H(+). It participates in bacterial outer membrane biogenesis; LPS lipid A biosynthesis. Catalyzes the N-acylation of UDP-3-O-acylglucosamine using 3-hydroxyacyl-ACP as the acyl donor. Is involved in the biosynthesis of lipid A, a phosphorylated glycolipid that anchors the lipopolysaccharide to the outer membrane of the cell. The chain is UDP-3-O-acylglucosamine N-acyltransferase from Bradyrhizobium sp. (strain ORS 278).